Here is a 274-residue protein sequence, read N- to C-terminus: MQNITQSWFVQGMIKATTDAWLKGWDERNGGNLTLRLDDADIAPYHDNFHQQPRYIPLSQPMPLLANTPFIVTGSGKFFRNVQLDPAANLGIVKVDSDGAGYHILWGLTNEAVPTSELPAHFLSHCERIKATNGKDRVIMHCHATNLIALTYVLENDTAVFTRQLWEGSTECLVVFPDGVGILPWMVPGTDEIGQATAQEMQKHSLMLWPFHGVFGSGPTLDETFGLIDTAEKSAQILVKVYSMGGMKQTISREELIALGQRFGVTPLASALAL.

Glu117 is a catalytic residue. The Zn(2+) site is built by His141, His143, and His212.

The protein belongs to the aldolase class II family. RhaD subfamily. As to quaternary structure, homotetramer. It depends on Zn(2+) as a cofactor.

The protein localises to the cytoplasm. It carries out the reaction L-rhamnulose 1-phosphate = (S)-lactaldehyde + dihydroxyacetone phosphate. The protein operates within carbohydrate degradation; L-rhamnose degradation; glycerone phosphate from L-rhamnose: step 3/3. Its function is as follows. Catalyzes the reversible cleavage of L-rhamnulose-1-phosphate to dihydroxyacetone phosphate (DHAP) and L-lactaldehyde. The polypeptide is Rhamnulose-1-phosphate aldolase (Escherichia coli O6:H1 (strain CFT073 / ATCC 700928 / UPEC)).